The chain runs to 220 residues: Small ribosomal subunit protein uS3 (220 aa).

The KH type-2 domain maps to 39–107; the sequence is IREHVEGRLK…RVHINISEIK (69 aa).

It belongs to the universal ribosomal protein uS3 family. As to quaternary structure, part of the 30S ribosomal subunit. Forms a tight complex with proteins S10 and S14.

Binds the lower part of the 30S subunit head. Binds mRNA in the 70S ribosome, positioning it for translation. This Shouchella clausii (strain KSM-K16) (Alkalihalobacillus clausii) protein is Small ribosomal subunit protein uS3.